Reading from the N-terminus, the 568-residue chain is Fumarate hydratase 2 (568 aa).

C133 serves as a coordination point for [4Fe-4S] cluster. (S)-malate-binding positions include Q134–D135, R173, G216, and N219–Q225. [4Fe-4S] cluster-binding residues include C252 and C346. (S)-malate is bound by residues R421, T467 to R471, and K491.

Belongs to the class-I fumarase family. Homodimer. It depends on [4Fe-4S] cluster as a cofactor.

Its subcellular location is the cytoplasm. It localises to the cytosol. The enzyme catalyses (S)-malate = fumarate + H2O. With respect to regulation, specifically and competitively inhibited by 2-thiomalate, which coordinates with the catalytic [4Fe-4S] cluster. Weakly inhibited by malonate. Functionally, cytosolic fumarate hydratase that catalyzes the reversible hydration of fumarate to (S)-malate. The protein is Fumarate hydratase 2 of Leishmania major.